Reading from the N-terminus, the 720-residue chain is Photosystem I P700 chlorophyll a apoprotein A1 (720 aa).

Transmembrane regions (helical) follow at residues 62 to 85 (IFSAHFGQLAIIFIWLSGMYFHGA), 148 to 171 (LYCTAIGGLIFAALMLFAGWFHYH), 186 to 210 (LNHHLAGLLGLGSLSWAGHQVHVSL), 282 to 300 (IVHHHLAIAVIFLIAGHMY), 337 to 360 (WHAQLALNLAILGSLTIVVAHHMY), 376 to 402 (LSLFTHHMWIGGFVIIGAAAHAAIFLV), 424 to 446 (AIISHLNWTCIFLGFHSFGLYIH), and 522 to 540 (FLVHHIHAFTIHVTVLILL). [4Fe-4S] cluster contacts are provided by Cys-564 and Cys-573. The next 2 helical transmembrane spans lie at 580 to 601 (HVFLGLFWMYNAISVVIFHFSW) and 655 to 677 (LSAYGLFFLGAHFVWAFSLMFLF). His-666 is a binding site for chlorophyll a'. Chlorophyll a-binding residues include Met-674 and Tyr-682. Phylloquinone is bound at residue Trp-683. The helical transmembrane segment at 715 to 720 (AVGVAH) threads the bilayer.

The protein belongs to the PsaA/PsaB family. The PsaA/B heterodimer binds the P700 chlorophyll special pair and subsequent electron acceptors. PSI consists of a core antenna complex that captures photons, and an electron transfer chain that converts photonic excitation into a charge separation. The eukaryotic PSI reaction center is composed of at least 11 subunits. Requires P700 is a chlorophyll a/chlorophyll a' dimer, A0 is one or more chlorophyll a, A1 is one or both phylloquinones and FX is a shared 4Fe-4S iron-sulfur center. as cofactor.

It is found in the plastid. Its subcellular location is the chloroplast thylakoid membrane. The catalysed reaction is reduced [plastocyanin] + hnu + oxidized [2Fe-2S]-[ferredoxin] = oxidized [plastocyanin] + reduced [2Fe-2S]-[ferredoxin]. PsaA and PsaB bind P700, the primary electron donor of photosystem I (PSI), as well as the electron acceptors A0, A1 and FX. PSI is a plastocyanin-ferredoxin oxidoreductase, converting photonic excitation into a charge separation, which transfers an electron from the donor P700 chlorophyll pair to the spectroscopically characterized acceptors A0, A1, FX, FA and FB in turn. Oxidized P700 is reduced on the lumenal side of the thylakoid membrane by plastocyanin. The sequence is that of Photosystem I P700 chlorophyll a apoprotein A1 from Ephedra tweediana (Vining horsetail).